The primary structure comprises 161 residues: UPF0225 protein HI_0277 (161 aa).

This sequence belongs to the UPF0225 family.

The polypeptide is UPF0225 protein HI_0277 (Haemophilus influenzae (strain ATCC 51907 / DSM 11121 / KW20 / Rd)).